The chain runs to 520 residues: Ribonuclease Y 2 (520 aa).

Residues 7–23 (VVLLLASIGVGYGLRAK) form a helical membrane-spanning segment. A KH domain is found at 206–269 (NHRSFIAENA…AVAMETMEMI (64 aa)). Residues 332-425 (ILEHSIETAK…VEAADAISGA (94 aa)) form the HD domain.

The protein belongs to the RNase Y family.

The protein localises to the cell membrane. Its function is as follows. Endoribonuclease that initiates mRNA decay. This Pediococcus pentosaceus (strain ATCC 25745 / CCUG 21536 / LMG 10740 / 183-1w) protein is Ribonuclease Y 2.